Consider the following 2166-residue polypeptide: Protein TIC236, chloroplastic (2166 aa).

Residues 1 to 37 (MSLRLQNPFLSTPLLHGSFNRREKRINVARRAFRSKR) constitute a chloroplast transit peptide. The Stromal portion of the chain corresponds to 38–101 (IYSEKKQNDW…RSLAPVWEEG (64 aa)). The helical transmembrane segment at 102–122 (LFFLRCSVFFAVISGVCLLVW) threads the bilayer. Residues 123–2166 (YGQNKARVFV…LFEYSATSQD (2044 aa)) are Chloroplast intermembrane-facing. The interval 1611 to 1649 (MSEGEVSETDRGGAVKIPSWAKEKEDDEKRTSRDRSEER) is disordered. The segment covering 1631-1649 (AKEKEDDEKRTSRDRSEER) has biased composition (basic and acidic residues).

The protein belongs to the TamB family. Part of the TIC complex, which can interact with components of the TOC complex to form a larger import complex. Interacts with the TOC complex component TOC75-3.

The protein localises to the plastid. It localises to the chloroplast inner membrane. It is found in the chloroplast intermembrane space. Part of the inner chloroplast membrane translocon complex (TIC) which associates with the outer chloroplast membrane translocon complex (TOC) and forms a supercomplex involved in protein precursor import into the chloroplast stroma. Required for the import of HSP93, TIC40 and RBCS protein precursors in the chloroplast stroma. Links the outer and inner membrane translocons of the chloroplast envelope. This chain is Protein TIC236, chloroplastic, found in Arabidopsis thaliana (Mouse-ear cress).